Reading from the N-terminus, the 193-residue chain is dCTP deaminase (193 aa).

DCTP-binding positions include 110–115 (RSSLAR), D128, 136–138 (VLE), Y171, K178, and Q182. E138 functions as the Proton donor/acceptor in the catalytic mechanism.

The protein belongs to the dCTP deaminase family. In terms of assembly, homotrimer.

It carries out the reaction dCTP + H2O + H(+) = dUTP + NH4(+). The protein operates within pyrimidine metabolism; dUMP biosynthesis; dUMP from dCTP (dUTP route): step 1/2. Functionally, catalyzes the deamination of dCTP to dUTP. This is dCTP deaminase from Buchnera aphidicola subsp. Baizongia pistaciae (strain Bp).